The following is a 695-amino-acid chain: Pre-mRNA-splicing factor clf-1 (695 aa).

HAT repeat units follow at residues 52–84 (EYQG…WELE), 86–118 (KEFA…AEIK), 120–152 (RNIN…VMEM), 154–185 (GDIP…LEKR), 187–218 (GEFD…FEEE), 220–259 (GTSD…YEAR), 261–295 (REYE…FEKQ), 305–337 (VILT…LEES), 339–373 (GDVD…LFLF), 383–419 (KDIG…FEIR), 421–452 (GQLT…LEQK), 454–486 (YEFE…LERG), 488–522 (DDLE…FEEE), 524–555 (GEYE…FEIN), 578–616 (EAKA…FEKT), and 621–654 (EDIE…YIFP).

This sequence belongs to the crooked-neck family. In terms of assembly, associated with the spliceosome.

The protein localises to the nucleus. Its function is as follows. Involved in pre-mRNA splicing and cell cycle progression. Required for the spliceosome assembly and initiation of the DNA replication. This Neurospora crassa (strain ATCC 24698 / 74-OR23-1A / CBS 708.71 / DSM 1257 / FGSC 987) protein is Pre-mRNA-splicing factor clf-1 (clf-1).